We begin with the raw amino-acid sequence, 89 residues long: Small ribosomal subunit protein uS15 (89 aa).

This sequence belongs to the universal ribosomal protein uS15 family. Part of the 30S ribosomal subunit. Forms a bridge to the 50S subunit in the 70S ribosome, contacting the 23S rRNA.

Its function is as follows. One of the primary rRNA binding proteins, it binds directly to 16S rRNA where it helps nucleate assembly of the platform of the 30S subunit by binding and bridging several RNA helices of the 16S rRNA. In terms of biological role, forms an intersubunit bridge (bridge B4) with the 23S rRNA of the 50S subunit in the ribosome. In Orientia tsutsugamushi (strain Ikeda) (Rickettsia tsutsugamushi), this protein is Small ribosomal subunit protein uS15.